A 612-amino-acid polypeptide reads, in one-letter code: Peroxisomal carnitine O-octanoyltransferase (612 aa).

Met-1 is subject to N-acetylmethionine. Residues Lys-40 and Lys-57 each carry the N6-succinyllysine modification. His-327 functions as the Proton acceptor in the catalytic mechanism. CoA-binding positions include Lys-406 and 410-417; that span reads KNKMLHPD. An N6-acetyllysine; alternate modification is found at Lys-406. Lys-406 is modified (N6-succinyllysine; alternate). 3 residues coordinate (R)-carnitine: Tyr-439, Thr-441, and Thr-452. Positions 610 to 612 match the Microbody targeting signal motif; sequence THL.

The protein belongs to the carnitine/choline acetyltransferase family. As to quaternary structure, monomer.

Its subcellular location is the peroxisome. The enzyme catalyses octanoyl-CoA + (R)-carnitine = O-octanoyl-(R)-carnitine + CoA. The catalysed reaction is 4,8-dimethylnonanoyl-CoA + (R)-carnitine = O-4,8-dimethylnonanoyl-(R)-carnitine + CoA. It functions in the pathway lipid metabolism; fatty acid beta-oxidation. Its function is as follows. Beta-oxidation of fatty acids. The highest activity concerns the C6 to C10 chain length substrate. Converts the end product of pristanic acid beta oxidation, 4,8-dimethylnonanoyl-CoA, to its corresponding carnitine ester. This Homo sapiens (Human) protein is Peroxisomal carnitine O-octanoyltransferase (CROT).